A 453-amino-acid polypeptide reads, in one-letter code: Chromosomal replication initiator protein DnaA (453 aa).

Residues 1 to 71 (MSEKEIWEKV…QAILFDVVGY (71 aa)) are domain I, interacts with DnaA modulators. Residues 71–114 (YEVKPHFITTEELANYSNNETATPKETTKPSTETTEDNHVLGRE) are domain II. Residues 115-331 (QFNAHNTFDT…GALTRLLAYS (217 aa)) form a domain III, AAA+ region region. ATP contacts are provided by glycine 159, glycine 161, lysine 162, and threonine 163. A domain IV, binds dsDNA region spans residues 332 to 453 (QLLGKPITTE…ENLEKEIRNV (122 aa)).

The protein belongs to the DnaA family. Oligomerizes as a right-handed, spiral filament on DNA at oriC.

It is found in the cytoplasm. Plays an essential role in the initiation and regulation of chromosomal replication. ATP-DnaA binds to the origin of replication (oriC) to initiate formation of the DNA replication initiation complex once per cell cycle. Binds the DnaA box (a 9 base pair repeat at the origin) and separates the double-stranded (ds)DNA. Forms a right-handed helical filament on oriC DNA; dsDNA binds to the exterior of the filament while single-stranded (ss)DNA is stabiized in the filament's interior. The ATP-DnaA-oriC complex binds and stabilizes one strand of the AT-rich DNA unwinding element (DUE), permitting loading of DNA polymerase. After initiation quickly degrades to an ADP-DnaA complex that is not apt for DNA replication. Binds acidic phospholipids. The chain is Chromosomal replication initiator protein DnaA from Staphylococcus aureus (strain bovine RF122 / ET3-1).